The sequence spans 872 residues: Extended synaptotagmin-2-A (872 aa).

Residues 1–25 form a disordered region; that stretch reads MSSESSAEKGPPPSPAENVQPGVPP. Residues 1–31 are Cytoplasmic-facing; sequence MSSESSAEKGPPPSPAENVQPGVPPAAEEPG. A helical membrane pass occupies residues 32–52; it reads MISVDIAGLFYQFSKTFILIF. Residues 53–55 are Lumenal-facing; it reads PVY. The helical transmembrane segment at 56–76 threads the bilayer; sequence VLGYFGLSFSWLLIALVLLLW. The Cytoplasmic portion of the chain corresponds to 77 to 872; that stretch reads WRRNKGNKNS…EDGTRPAVSS (796 aa). Positions 119–298 constitute an SMP-LTD domain; sequence DIERAEWLNK…LPNRITVPLV (180 aa). C2 domains lie at 297–417 and 442–588; these read LVSD…DEWF and NLDQ…HLNN. Residues Lys328, Asp329, Asp341, Asp388, Glu389, Asp390, Asp392, Asp394, and Asp395 each coordinate Ca(2+). A compositionally biased stretch (basic and acidic residues) spans 608–617; sequence KPVRSPDEQH. Residues 608 to 711 form a disordered region; the sequence is KPVRSPDEQH…EPTPSIASDI (104 aa). A compositionally biased stretch (pro residues) spans 632-652; that stretch reads PPTPQMPSPSPAVAHKPPPTP. Residues 664-681 show a composition bias toward polar residues; that stretch reads NKGTPPSASPKSPTELHQ. Residues 682 to 696 show a composition bias toward low complexity; sequence SSSSLSGSSFTYSPS. Positions 737-859 constitute a C2 3 domain; that stretch reads PLGQIQLTIR…DAAKGWTQWY (123 aa). Positions 784–791 are required for phosphatidylinositol 4,5-bisphosphate-dependent location at the cell membrane; it reads KRRSGRRK.

This sequence belongs to the extended synaptotagmin family. As to quaternary structure, interacts with fgfr1 that has been activated by fgf1 binding. Interacts (via C2 domains) with the AP-2 complex (via an alpha subunit). Identified in a complex with the AP-2 complex and fgfr1.

The protein resides in the cell membrane. Its subcellular location is the endoplasmic reticulum membrane. In terms of biological role, tethers the endoplasmic reticulum to the cell membrane and promotes the formation of appositions between the endoplasmic reticulum and the cell membrane. Binds glycerophospholipids in a barrel-like domain and may play a role in cellular lipid transport. Plays a role in the rapid internalization of fgfr1 that has been activated by fgf1 binding; this occurs most likely via the AP-2 complex. Required for normal fgf signaling and the activation of downstream signaling cascades via its role in the internalization of activated fgfr1. Required for normal embryonic development via its role in fgf signaling and the downstream regulation of t/xBRA expression. The protein is Extended synaptotagmin-2-A (esyt2-a) of Xenopus laevis (African clawed frog).